A 348-amino-acid polypeptide reads, in one-letter code: MTRLTLALDAMGGDFGPCVTVPAALQALASNPALNLLLVGDPAAITPLLAKVDSDLLSRLEVVPAESVIASDARPSQAIRASRGTSMRIALELIKDGRAQACVSAGNTGALMGLAKLLIKPLEGIERPALVSVLPHQQHGKTVVLDLGANVECDSTMLVQFAVMGSVMAEEVLELTNPRVALLNIGEEESKGLSTIREAAAQLKETPSINYIGYLEGNDLLTGKTDVMVCDGFVGNVTLKTVEGVVRMFLSLLKSPASGPEQKQKRSWWLKWLGRLLQKRLSKRFGHLNPDQYNGACLLGLRGTVIKSHGAANQRAFAVAIEQAMQTVRRQLPERIAARLEAVLPKSD.

It belongs to the PlsX family. In terms of assembly, homodimer. Probably interacts with PlsY.

The protein resides in the cytoplasm. The enzyme catalyses a fatty acyl-[ACP] + phosphate = an acyl phosphate + holo-[ACP]. The protein operates within lipid metabolism; phospholipid metabolism. Its function is as follows. Catalyzes the reversible formation of acyl-phosphate (acyl-PO(4)) from acyl-[acyl-carrier-protein] (acyl-ACP). This enzyme utilizes acyl-ACP as fatty acyl donor, but not acyl-CoA. The sequence is that of Phosphate acyltransferase from Pectobacterium atrosepticum (strain SCRI 1043 / ATCC BAA-672) (Erwinia carotovora subsp. atroseptica).